We begin with the raw amino-acid sequence, 190 residues long: Potassium-transporting ATPase KdpC subunit (190 aa).

A helical transmembrane segment spans residues 6–26 (PAVFLVLLLTLITGLLYPLLT). Residues 67-88 (GRPSATSDRPYNPLASSGSNLA) form a disordered region. Residues 69–88 (PSATSDRPYNPLASSGSNLA) show a composition bias toward polar residues.

Belongs to the KdpC family. As to quaternary structure, the system is composed of three essential subunits: KdpA, KdpB and KdpC.

Its subcellular location is the cell inner membrane. Functionally, part of the high-affinity ATP-driven potassium transport (or Kdp) system, which catalyzes the hydrolysis of ATP coupled with the electrogenic transport of potassium into the cytoplasm. This subunit acts as a catalytic chaperone that increases the ATP-binding affinity of the ATP-hydrolyzing subunit KdpB by the formation of a transient KdpB/KdpC/ATP ternary complex. The chain is Potassium-transporting ATPase KdpC subunit from Erwinia tasmaniensis (strain DSM 17950 / CFBP 7177 / CIP 109463 / NCPPB 4357 / Et1/99).